A 707-amino-acid polypeptide reads, in one-letter code: Metal transporter CNNM3 (707 aa).

The chain crosses the membrane as a helical span at residues 11–27; the sequence is LGWLFAALCLGNAAGEA. N-linked (GlcNAc...) asparagine glycosylation is present at Asn-73. The CNNM transmembrane domain occupies 130-308; the sequence is EAAPPWALGL…DPYSDLSKGV (179 aa). 3 helical membrane-spanning segments follow: residues 193-213, 221-241, and 261-281; these read CALG…AVLL, AVPA…VVPA, and LAVL…ELAA. CBS domains follow at residues 318 to 379 and 386 to 452; these read LTPL…CTPL and YNHP…ILDE. At Ser-661 the chain carries Phosphoserine. The segment covering 678–691 has biased composition (polar residues); sequence LGEKTTTAAGSSHS. The segment at 678 to 707 is disordered; sequence LGEKTTTAAGSSHSRPGVPVEGSPGRNPGV. A Phosphoserine modification is found at Ser-700.

This sequence belongs to the ACDP family. In terms of tissue distribution, widely expressed. Expressed at higher level in heart and spleen.

Its subcellular location is the cell membrane. Probable metal transporter. The polypeptide is Metal transporter CNNM3 (CNNM3) (Homo sapiens (Human)).